The primary structure comprises 300 residues: Urease accessory protein UreD (300 aa).

Belongs to the UreD family. UreD, UreF and UreG form a complex that acts as a GTP-hydrolysis-dependent molecular chaperone, activating the urease apoprotein by helping to assemble the nickel containing metallocenter of UreC. The UreE protein probably delivers the nickel.

It localises to the cytoplasm. Required for maturation of urease via the functional incorporation of the urease nickel metallocenter. The sequence is that of Urease accessory protein UreD from Prochlorococcus marinus (strain MIT 9215).